Here is a 345-residue protein sequence, read N- to C-terminus: Beta-2-glycoprotein 1 (345 aa).

The first 19 residues, 1 to 19 (MISPVLILFSSFLCHVAIA), serve as a signal peptide directing secretion. 4 consecutive Sushi domains span residues 21 to 81 (RTCP…KCTP), 82 to 139 (RVCP…VCAP), 140 to 202 (IICP…ECRE), and 203 to 262 (VKCP…SCKA). 11 disulfides stabilise this stretch: Cys23–Cys66, Cys51–Cys79, Cys84–Cys124, Cys110–Cys137, Cys142–Cys188, Cys174–Cys200, Cys205–Cys248, Cys234–Cys260, Cys264–Cys315, Cys300–Cys325, and Cys307–Cys345. Thr33 carries O-linked (GalNAc...) threonine glycosylation. O-linked (GalNAc...) threonine glycosylation occurs at Thr149. An N-linked (GlcNAc...) (complex) asparagine glycan is attached at Asn162. 2 N-linked (GlcNAc...) asparagine glycosylation sites follow: Asn183 and Asn193. The N-linked (GlcNAc...) asparagine glycan is linked to Asn253. The tract at residues 263–345 (SCKVPVKKAT…KTDASDVKPC (83 aa)) is sushi-like.

N- and O-glycosylated. PubMed:6587378 also reports glycosylation on 'Asn-188' for their allele. In terms of tissue distribution, expressed by the liver and secreted in plasma.

Its subcellular location is the secreted. In terms of biological role, binds to various kinds of negatively charged substances such as heparin, phospholipids, and dextran sulfate. May prevent activation of the intrinsic blood coagulation cascade by binding to phospholipids on the surface of damaged cells. This chain is Beta-2-glycoprotein 1 (APOH), found in Homo sapiens (Human).